Consider the following 471-residue polypeptide: UDP-N-acetylmuramate--L-alanine ligase (471 aa).

114-120 provides a ligand contact to ATP; that stretch reads GTHGKTT.

It belongs to the MurCDEF family.

The protein localises to the cytoplasm. The catalysed reaction is UDP-N-acetyl-alpha-D-muramate + L-alanine + ATP = UDP-N-acetyl-alpha-D-muramoyl-L-alanine + ADP + phosphate + H(+). Its pathway is cell wall biogenesis; peptidoglycan biosynthesis. Its function is as follows. Cell wall formation. The chain is UDP-N-acetylmuramate--L-alanine ligase from Sinorhizobium medicae (strain WSM419) (Ensifer medicae).